Consider the following 518-residue polypeptide: Protein translocase subunit SecD (518 aa).

The next 6 helical transmembrane spans lie at 9 to 29 (IFLS…NFMQ), 361 to 381 (LIGF…LGLF), 384 to 404 (IALS…QATL), 406 to 426 (LPGI…NVLI), 452 to 474 (FATI…IFGV), and 486 to 506 (IGII…IDIW).

Belongs to the SecD/SecF family. SecD subfamily. As to quaternary structure, forms a complex with SecF. Part of the essential Sec protein translocation apparatus which comprises SecA, SecYEG and auxiliary proteins SecDF-YajC and YidC.

The protein localises to the cell inner membrane. Its function is as follows. Part of the Sec protein translocase complex. Interacts with the SecYEG preprotein conducting channel. SecDF uses the proton motive force (PMF) to complete protein translocation after the ATP-dependent function of SecA. The chain is Protein translocase subunit SecD from Rickettsia conorii (strain ATCC VR-613 / Malish 7).